Reading from the N-terminus, the 283-residue chain is Probable endonuclease 4 (283 aa).

Zn(2+) contacts are provided by H69, H109, E145, D179, H182, H216, D229, H231, and E261.

The protein belongs to the AP endonuclease 2 family. Zn(2+) serves as cofactor.

It catalyses the reaction Endonucleolytic cleavage to 5'-phosphooligonucleotide end-products.. Functionally, endonuclease IV plays a role in DNA repair. It cleaves phosphodiester bonds at apurinic or apyrimidinic (AP) sites, generating a 3'-hydroxyl group and a 5'-terminal sugar phosphate. The sequence is that of Probable endonuclease 4 from Campylobacter curvus (strain 525.92).